A 628-amino-acid chain; its full sequence is Netrin-4 (628 aa).

An N-terminal signal peptide occupies residues 1 to 18; the sequence is MGSCARLLLLWGCTVVAA. A Laminin N-terminal domain is found at 30–261; it reads CEKACNPRMG…AIYDFIVKGS (232 aa). 2 N-linked (GlcNAc...) asparagine glycosylation sites follow: N56 and N163. 12 cysteine pairs are disulfide-bonded: C262–C271, C264–C293, C295–C304, C307–C329, C332–C341, C334–C359, C362–C371, C374–C392, C395–C413, C397–C420, C422–C431, and C434–C446. 3 consecutive Laminin EGF-like domains span residues 262-331, 332-394, and 395-448; these read CFCN…ECRT, CKCN…ACKP, and CSCH…GCRP. An N-linked (GlcNAc...) asparagine glycan is attached at N353. N-linked (GlcNAc...) asparagine glycosylation occurs at N483. 2 disulfides stabilise this stretch: C506/C576 and C520/C627. Residues 506–627 form the NTR domain; the sequence is CECKEQTLGN…KVMDILKREC (122 aa).

As to quaternary structure, may form a homodimer. In terms of tissue distribution, expressed in kidney, spleen, mammary gland, aorta, heart, ovary, prostate and fetal spleen.

The protein resides in the secreted. Its subcellular location is the extracellular space. It is found in the extracellular matrix. It localises to the basement membrane. Functionally, may play an important role in neural, kidney and vascular development. Promotes neurite elongation from olfactory bulb explants. The polypeptide is Netrin-4 (NTN4) (Homo sapiens (Human)).